The sequence spans 908 residues: Glutamate receptor ionotropic, kainate 2 (908 aa).

An N-terminal signal peptide occupies residues Met-1–Gly-31. The Extracellular segment spans residues Met-32 to Pro-561. Asn-67, Asn-73, Asn-275, Asn-378, Asn-412, Asn-423, and Asn-430 each carry an N-linked (GlcNAc...) asparagine glycan. A disulfide bridge connects residues Cys-96 and Cys-347. Residues Pro-516, Ala-518, and Arg-523 each contribute to the L-glutamate site. Asn-546 carries an N-linked (GlcNAc...) asparagine glycan. A helical membrane pass occupies residues Asp-562–Ala-582. The Cytoplasmic segment spans residues Arg-583 to Gly-638. Residues Ile-639 to Leu-659 traverse the membrane as a helical segment. Over Thr-660–Asn-819 the chain is Extracellular. Positions 689, 690, and 738 each coordinate L-glutamate. Cys-750 and Cys-804 are disulfide-bonded. Asn-751 carries N-linked (GlcNAc...) asparagine glycosylation. Residues Ile-820–Gly-840 form a helical membrane-spanning segment. Topologically, residues Glu-841–Ala-908 are cytoplasmic.

This sequence belongs to the glutamate-gated ion channel (TC 1.A.10.1) family. GRIK2 subfamily. In terms of assembly, homotetramer and heterotetramer with GRIK5. Tetramers may be formed by the dimerization of dimers.

It is found in the cell membrane. It localises to the postsynaptic cell membrane. The catalysed reaction is Ca(2+)(in) = Ca(2+)(out). The enzyme catalyses Na(+)(in) = Na(+)(out). With respect to regulation, cold receptor activity activated by temperatures between 10-19 degrees Celsius. In terms of biological role, ionotropic glutamate receptor that functions as a cation-permeable ligand-gated ion channel, gated by L-glutamate and the glutamatergic agonist kainic acid. L-glutamate acts as an excitatory neurotransmitter at many synapses in the central nervous system. Binding of the excitatory neurotransmitter L-glutamate induces a conformation change, leading to the opening of the cation channel, and thereby converts the chemical signal to an electrical impulse. The receptor then desensitizes rapidly and enters a transient inactive state, characterized by the presence of bound agonist. Its function is as follows. Independent of its ionotropic glutamate receptor activity, acts as a thermoreceptor conferring sensitivity to cold temperatures. Functions in dorsal root ganglion neurons. The protein is Glutamate receptor ionotropic, kainate 2 of Danio rerio (Zebrafish).